We begin with the raw amino-acid sequence, 303 residues long: MRLFNWRRQAILHAMPVVKPDQIRTPWREFWRRFRRQHVALVAGGFVLALILVAIFARWLTPYDAENYFDYDSLNNGPSLQHWFGVDSLGRDIFSRVLVGAQISLAAGVFAVFIGAIIGTVLGLLAGYYEGWWDRFIMRICDVLFAFPGILLAIAVVAVLGSGIANVIVAVAIFSIPAFARLVRGNTLVLKQQTFIESARSIGASDTTILFSHILPGTVSSIVVFFTMRIGTSIISAASLSFLGLGAQPPTPEWGAMLNEARADMVIAPHVALFPAVAIFLTVLAFNLLGDGLRDALDPKIKG.

The next 7 helical transmembrane spans lie at 37–57 (QHVA…AIFA), 105–125 (LAAG…LGLL), 144–164 (LFAF…GSGI), 165–185 (ANVI…LVRG), 208–228 (TILF…FFTM), 230–250 (IGTS…AQPP), and 266–286 (VIAP…VLAF). In terms of domain architecture, ABC transmembrane type-1 spans 101–290 (AQISLAAGVF…LTVLAFNLLG (190 aa)).

Belongs to the binding-protein-dependent transport system permease family. As to quaternary structure, the complex is composed of two ATP-binding proteins (GsiA), two transmembrane proteins (GsiC and GsiD) and a solute-binding protein (GsiB).

Its subcellular location is the cell inner membrane. Functionally, part of the ABC transporter complex GsiABCD involved in glutathione import. Probably responsible for the translocation of the substrate across the membrane. In Salmonella paratyphi A (strain ATCC 9150 / SARB42), this protein is Glutathione transport system permease protein GsiD.